Here is a 194-residue protein sequence, read N- to C-terminus: Protein phosphatase 1 regulatory subunit 1B (194 aa).

Met1 bears the N-acetylmethionine mark. Residues 1–194 (MDPKDRKKIQ…GEEPQHPSPP (194 aa)) form a disordered region. Thr34 carries the phosphothreonine; by PKA modification. The segment covering 41-63 (VSEHSSPEEEASPHQRTSGEGHH) has biased composition (basic and acidic residues). Ser45 and Ser46 each carry phosphoserine. Thr75 is modified (phosphothreonine). Over residues 84-95 (HLQTISNLSENQ) the composition is skewed to polar residues. Phosphoserine is present on residues Ser97 and Ser130. Positions 113–131 (QEDDEEDEDEEEDEEEDSQ) are enriched in acidic residues. Basic and acidic residues predominate over residues 160-170 (PPLDEPQRDGN). Ser192 carries the post-translational modification Phosphoserine.

Belongs to the protein phosphatase inhibitor 1 family. In terms of processing, dopamine- and cyclic AMP-regulated neuronal phosphoprotein. Phosphorylation of Thr-34 is required for activity.

The protein localises to the cytoplasm. Functionally, inhibitor of protein-phosphatase 1. The sequence is that of Protein phosphatase 1 regulatory subunit 1B (Ppp1r1b) from Mus musculus (Mouse).